The primary structure comprises 564 residues: Nucleoprotein (564 aa).

A binding site for the cap structure m7GTP region spans residues 54 to 236 (LRKTKRGEED…VTKDESSINI (183 aa)). Positions 380 and 382 each coordinate Mn(2+). The Zn(2+) site is built by Glu390, Cys497, His500, and Cys525. Asp529 is a binding site for Mn(2+).

The protein belongs to the arenaviridae nucleocapsid protein family. As to quaternary structure, homomultimerizes to form the nucleocapsid. Binds to viral genomic RNA. Interacts with glycoprotein G2. Interacts with protein Z; this interaction probably directs the encapsidated genome to budding sites. Interacts with protein L; this interaction does not interfere with Z-L interaction. Interacts with host IKBKE (via Protein kinase domain); the interaction inhibits IKBKE kinase activity.

The protein resides in the virion. Its subcellular location is the host cytoplasm. In terms of biological role, encapsidates the genome, protecting it from nucleases. The encapsidated genomic RNA is termed the nucleocapsid (NC). Serves as template for viral transcription and replication. The increased presence of protein N in host cell does not seem to trigger the switch from transcription to replication as observed in other negative strain RNA viruses. Through the interaction with host IKBKE, strongly inhibits the phosphorylation and nuclear translocation of host IRF3, a protein involved in interferon activation pathway, leading to the inhibition of interferon-beta and IRF3-dependent promoters activation. Also encodes a functional 3'-5' exoribonuclease that degrades preferentially dsRNA substrates and thereby participates in the suppression of interferon induction. The protein is Nucleoprotein of Akodon azarae (Azara's grass mouse).